Consider the following 1434-residue polypeptide: Probable ATP-dependent RNA helicase spindle-E (1434 aa).

Positions Leu-125–Val-292 constitute a Helicase ATP-binding domain. Residue Gly-138–Thr-145 coordinates ATP. The DEAH box motif lies at Asp-238–His-241. The Helicase C-terminal domain maps to Gln-354–Asn-526. The 64-residue stretch at Ala-938–Gln-1001 folds into the Tudor domain.

Belongs to the DEAD box helicase family. DEAH subfamily.

The protein resides in the cytoplasm. The protein localises to the perinuclear region. It is found in the cytoplasmic ribonucleoprotein granule. The catalysed reaction is ATP + H2O = ADP + phosphate + H(+). Its function is as follows. Probable ATP-binding RNA helicase which plays a central role during spermatogenesis and oogenesis by repressing transposable elements and preventing their mobilization, which is essential for the germline integrity. Acts via the piRNA metabolic process, which mediates the repression of transposable elements during meiosis by forming complexes composed of piRNAs and Piwi and govern the methylation and subsequent repression of transposons. Involved in the repression of LTR retrotransposon copia. Also involved in telomere regulation by repressing specialized telomeric retroelements HeT-A, TAHRE, and TART; Drosophila telomeres being maintained by transposition of specialized telomeric retroelements. Involved in telomeric trans-silencing, a repression mechanism by which a transposon or a transgene inserted in subtelomeric heterochromatin has the capacity to repress in trans in the female germline, a homologous transposon, or transgene located in euchromatin. Involved in the repression of testis-expressed Stellate genes by the homologous Su(Ste) repeats. Required for anteroposterior and dorsoventral axis formation during oogenesis. Key component of the perinuclear meiotic nuage, an electron dense structure involved in the post-transcriptional regulation of transposons and mRNAs; required for recruitment of other nuage comonents including vas, krimp, aub and mael. May have a role in production of piwi-interacting RNA (piRNA). This chain is Probable ATP-dependent RNA helicase spindle-E, found in Drosophila melanogaster (Fruit fly).